The primary structure comprises 417 residues: Gamma-glutamyl phosphate reductase (417 aa).

The protein belongs to the gamma-glutamyl phosphate reductase family.

Its subcellular location is the cytoplasm. It catalyses the reaction L-glutamate 5-semialdehyde + phosphate + NADP(+) = L-glutamyl 5-phosphate + NADPH + H(+). It functions in the pathway amino-acid biosynthesis; L-proline biosynthesis; L-glutamate 5-semialdehyde from L-glutamate: step 2/2. In terms of biological role, catalyzes the NADPH-dependent reduction of L-glutamate 5-phosphate into L-glutamate 5-semialdehyde and phosphate. The product spontaneously undergoes cyclization to form 1-pyrroline-5-carboxylate. This is Gamma-glutamyl phosphate reductase from Escherichia coli O17:K52:H18 (strain UMN026 / ExPEC).